A 122-amino-acid chain; its full sequence is Large ribosomal subunit protein uL14 (122 aa).

It belongs to the universal ribosomal protein uL14 family. Part of the 50S ribosomal subunit. Forms a cluster with proteins L3 and L19. In the 70S ribosome, L14 and L19 interact and together make contacts with the 16S rRNA in bridges B5 and B8.

Binds to 23S rRNA. Forms part of two intersubunit bridges in the 70S ribosome. In Lactobacillus delbrueckii subsp. bulgaricus (strain ATCC BAA-365 / Lb-18), this protein is Large ribosomal subunit protein uL14.